A 184-amino-acid chain; its full sequence is GTP cyclohydrolase 1 (184 aa).

Cys75, His78, and Cys146 together coordinate Zn(2+).

This sequence belongs to the GTP cyclohydrolase I family. As to quaternary structure, homomer.

The catalysed reaction is GTP + H2O = 7,8-dihydroneopterin 3'-triphosphate + formate + H(+). It participates in cofactor biosynthesis; 7,8-dihydroneopterin triphosphate biosynthesis; 7,8-dihydroneopterin triphosphate from GTP: step 1/1. This chain is GTP cyclohydrolase 1, found in Teredinibacter turnerae (strain ATCC 39867 / T7901).